Here is a 236-residue protein sequence, read N- to C-terminus: MEPYSEDSILALTEKVFKISGYRFQDHELLKTAVTHPSIAAERYASYERLEFLGDAVLGLVVSEMLYTLFPDDSEGLLTKKRIALVRGSKVVEIAQSLNLGNILLMSKGELTSGGISNNSNLENALEALIGAIYVDGGLESVRHFILQHWKPLATNLADTPLQDAKTALQEWAQGHNFAIPSYRLINKSGLEHAPVFTVEVTVNGQRVHATGCKKKYAEIAAAKLMLEKVTKQNDP.

One can recognise an RNase III domain in the interval 13–138 (TEKVFKISGY…LIGAIYVDGG (126 aa)). E51 provides a ligand contact to Mg(2+). Residue D55 is part of the active site. Residues N124 and E127 each coordinate Mg(2+). E127 is a catalytic residue. Residues 164-232 (DAKTALQEWA…AKLMLEKVTK (69 aa)) form the DRBM domain.

This sequence belongs to the ribonuclease III family. In terms of assembly, homodimer. Requires Mg(2+) as cofactor.

It is found in the cytoplasm. The catalysed reaction is Endonucleolytic cleavage to 5'-phosphomonoester.. In terms of biological role, digests double-stranded RNA. Involved in the processing of primary rRNA transcript to yield the immediate precursors to the large and small rRNAs (23S and 16S). Processes some mRNAs, and tRNAs when they are encoded in the rRNA operon. Processes pre-crRNA and tracrRNA of type II CRISPR loci if present in the organism. The sequence is that of Ribonuclease 3 from Anaplasma phagocytophilum (strain HZ).